The primary structure comprises 121 residues: Non-specific lipid-transfer protein 9 (121 aa).

An N-terminal signal peptide occupies residues Met1 to Ser27. 4 cysteine pairs are disulfide-bonded: Cys31/Cys80, Cys41/Cys57, Cys58/Cys102, and Cys78/Cys116.

It belongs to the plant LTP family.

Plant non-specific lipid-transfer proteins transfer phospholipids as well as galactolipids across membranes. May play a role in wax or cutin deposition in the cell walls of expanding epidermal cells and certain secretory tissues. The polypeptide is Non-specific lipid-transfer protein 9 (LTP9) (Arabidopsis thaliana (Mouse-ear cress)).